Consider the following 1617-residue polypeptide: Mitogen-activated protein kinase kinae kinase bck1 (1617 aa).

Disordered stretches follow at residues 1 to 73 (MDGQ…SQLQ), 167 to 199 (GPVH…RTMP), 211 to 253 (SVAS…GGMS), 345 to 399 (RQIH…SPNL), 455 to 555 (DHRR…SSSY), 568 to 633 (KRSK…LRGK), 739 to 820 (GVPL…ISPE), 832 to 1144 (EHKR…RGDI), and 1164 to 1277 (DIDL…EILR). A compositionally biased stretch (low complexity) spans 19-28 (TQPSQSHMLS). The span at 44-60 (VMPPPPPGPPPGPPPGP) shows a compositional bias: pro residues. Positions 220 to 248 (TAQNHQSQTGQTNEPTKSPSHRQNNSNTL) are enriched in polar residues. Positions 482–504 (KSGSPATQHATLNQGLSSSSTGD) are enriched in polar residues. A compositionally biased stretch (basic and acidic residues) spans 524–533 (RYYESRKGQE). Composition is skewed to polar residues over residues 535–555 (IRPS…SSSY) and 586–596 (ESPTSPVNLRQ). 2 stretches are compositionally biased toward basic and acidic residues: residues 832–841 (EHKREVERKQ) and 871–885 (FDER…KKAD). 2 stretches are compositionally biased toward polar residues: residues 897–907 (PQESYTLTRIN) and 956–980 (GGKQ…PQSS). Composition is skewed to basic and acidic residues over residues 1128 to 1140 (EDER…DSFA) and 1189 to 1198 (PENDLHKKEN). Polar residues-rich tracts occupy residues 1199-1208 (QPSSSYTGEM) and 1257-1272 (NQAS…NQKS). The region spanning 1323-1596 (IIRGQLIGKG…QTLLTRHPFC (274 aa)) is the Protein kinase domain. Residues 1329–1337 (IGKGTYGRV) and Lys-1352 each bind ATP. The Proton acceptor role is filled by Asp-1453.

The protein belongs to the protein kinase superfamily. STE Ser/Thr protein kinase family. MAP kinase kinase subfamily.

The catalysed reaction is L-seryl-[protein] + ATP = O-phospho-L-seryl-[protein] + ADP + H(+). It carries out the reaction L-threonyl-[protein] + ATP = O-phospho-L-threonyl-[protein] + ADP + H(+). Functionally, mitogen-activated kinase kinase kinase (MAPKKK), part of the cell wall integrity (CWI) signaling pathway composed by three protein kinases bck1, mkk2 and mpkA and responsible for the maintaining of cell-wall integrity balance. The CWI pathway also regulates the oxidative stress response, as well as the production of some secondary metabolites including pyomelanin. In Aspergillus fumigatus (strain CBS 144.89 / FGSC A1163 / CEA10) (Neosartorya fumigata), this protein is Mitogen-activated protein kinase kinae kinase bck1.